A 187-amino-acid polypeptide reads, in one-letter code: UPF0301 protein VSAL_I0547 (187 aa).

The protein belongs to the UPF0301 (AlgH) family.

In Aliivibrio salmonicida (strain LFI1238) (Vibrio salmonicida (strain LFI1238)), this protein is UPF0301 protein VSAL_I0547.